Here is a 507-residue protein sequence, read N- to C-terminus: Histidine ammonia-lyase (507 aa).

A cross-link (5-imidazolinone (Ala-Gly)) is located at residues 141–143; that stretch reads ASG. Position 142 is a 2,3-didehydroalanine (Ser) (Ser-142).

The protein belongs to the PAL/histidase family. Contains an active site 4-methylidene-imidazol-5-one (MIO), which is formed autocatalytically by cyclization and dehydration of residues Ala-Ser-Gly.

Its subcellular location is the cytoplasm. It carries out the reaction L-histidine = trans-urocanate + NH4(+). It participates in amino-acid degradation; L-histidine degradation into L-glutamate; N-formimidoyl-L-glutamate from L-histidine: step 1/3. This Burkholderia orbicola (strain MC0-3) protein is Histidine ammonia-lyase.